Consider the following 535-residue polypeptide: Alkaline phosphatase, placental type (535 aa).

The N-terminal stretch at 1–22 is a signal peptide; that stretch reads MLGPCMLLLLLLLGLRLQLSLG. Residue Asp-64 participates in Mg(2+) binding. Residues Asp-64 and Ser-114 each contribute to the Zn(2+) site. Ser-114 acts as the Phosphoserine intermediate in catalysis. A disulfide bridge links Cys-143 with Cys-205. An N-linked (GlcNAc...) asparagine glycan is attached at Asn-144. Ser-177 serves as a coordination point for Mg(2+). Glu-238 contributes to the Ca(2+) binding site. Asn-271 carries an N-linked (GlcNAc...) asparagine glycan. The Ca(2+) site is built by Phe-291, Glu-292, and Asp-307. Glu-333 lines the Mg(2+) pocket. Asp-338, His-342, Asp-379, and His-380 together coordinate Zn(2+). A disordered region spans residues 425-449; it reads DGARPDVTESESGSPEYRQQSAVPL. Positions 434–446 are enriched in polar residues; it reads SESGSPEYRQQSA. His-454 is a Zn(2+) binding site. Cysteines 489 and 496 form a disulfide. Asp-506 carries the GPI-anchor amidated aspartate lipid modification. Residues 507 to 535 constitute a propeptide, removed in mature form; sequence AAHPGRSVVPALLPLLAGTLLLLETATAP. The chain crosses the membrane as a helical span at residues 513–529; sequence SVVPALLPLLAGTLLLL.

Belongs to the alkaline phosphatase family. As to quaternary structure, homodimer. The cofactor is Mg(2+). Zn(2+) serves as cofactor. Requires Ca(2+) as cofactor. As to expression, detected in placenta (at protein level).

The protein localises to the cell membrane. It catalyses the reaction a phosphate monoester + H2O = an alcohol + phosphate. Alkaline phosphatase that can hydrolyze various phosphate compounds. The protein is Alkaline phosphatase, placental type of Homo sapiens (Human).